Reading from the N-terminus, the 294-residue chain is Protoheme IX farnesyltransferase (294 aa).

Helical transmembrane passes span 8 to 28 (LTKPGIVLGNLMSSAGGFLIA), 35 to 55 (YSLFITMIVGTALVIASGCVL), 81 to 101 (IFLNQSIFYAVILSIFGFLFL), 107 to 127 (VLTIYLSAIGLFIYVGVYSLW), 133 to 153 (IYSIMVGSISGAMPPVIGYCA), 163 to 183 (LMLLIIFSLWQIPHSHSIAIL), 209 to 226 (MVVYIIGFIIATILFTVM), 230 to 252 (SYIFLIIISIMNLWWLHMGFYGY), and 266 to 286 (FLLSLIIIISLNLLLSLDHIL).

This sequence belongs to the UbiA prenyltransferase family. Protoheme IX farnesyltransferase subfamily.

Its subcellular location is the cell inner membrane. It carries out the reaction heme b + (2E,6E)-farnesyl diphosphate + H2O = Fe(II)-heme o + diphosphate. The protein operates within porphyrin-containing compound metabolism; heme O biosynthesis; heme O from protoheme: step 1/1. Its function is as follows. Converts heme B (protoheme IX) to heme O by substitution of the vinyl group on carbon 2 of heme B porphyrin ring with a hydroxyethyl farnesyl side group. In Blochmanniella pennsylvanica (strain BPEN), this protein is Protoheme IX farnesyltransferase.